We begin with the raw amino-acid sequence, 694 residues long: Potassium-transporting ATPase ATP-binding subunit (694 aa).

The next 4 membrane-spanning stretches (helical) occupy residues 36–56 (VMFV…RDLI), 62–82 (LAFS…ANFA), 218–238 (IALN…TATI), and 249–269 (IPII…IGAL). Residue D306 is the 4-aspartylphosphate intermediate of the active site. Residues D343, E347, 376-383 (FTAQTRMS), and K394 each bind ATP. D530 and D534 together coordinate Mg(2+). Transmembrane regions (helical) follow at residues 600 to 620 (FAII…LNVM), 628 to 648 (AILS…PLSL), and 666 to 686 (LVIY…LIDL).

Belongs to the cation transport ATPase (P-type) (TC 3.A.3) family. Type IA subfamily. The system is composed of three essential subunits: KdpA, KdpB and KdpC.

It localises to the cell inner membrane. It catalyses the reaction K(+)(out) + ATP + H2O = K(+)(in) + ADP + phosphate + H(+). Functionally, part of the high-affinity ATP-driven potassium transport (or Kdp) system, which catalyzes the hydrolysis of ATP coupled with the electrogenic transport of potassium into the cytoplasm. This subunit is responsible for energy coupling to the transport system and for the release of the potassium ions to the cytoplasm. The protein is Potassium-transporting ATPase ATP-binding subunit of Agrobacterium fabrum (strain C58 / ATCC 33970) (Agrobacterium tumefaciens (strain C58)).